The primary structure comprises 500 residues: Cytochrome P450 monooxygenase astJ (500 aa).

Cys440 contributes to the heme binding site.

It belongs to the cytochrome P450 family. Heme serves as cofactor.

The protein operates within secondary metabolite biosynthesis; terpenoid biosynthesis. Its function is as follows. Cytochrome P450 monooxygenase; part of the gene cluster that mediates the biosynthesis of astellolides, drimane-type sesquiterpene esters that show antimicrobial, anti-inflammatory, and anti-tumor activities. The first step in astellolide biosynthesis is performed by the sesquiterpene cyclase astC that catalyzes the formation of drimanyl pyrophosphate from farnesyl pyrophosphate. Drimanyl pyrophosphate is then dephosphorylated by the sesquiterpene phosphatase astI to produce drimanyl monophosphate which is further dephosphorylated to drim-8-ene-11-ol by atsK. Drim-8-ene-11-ol is converted to confertifolin, probably by the cytochrome P450 monooxygenase astD and/or the dehydrogenase astE. The cytochrome P450 monooxygenases astB, astF and astJ then hydroxylate confertifolin at C6, C14, or C15 to form trihydroxy confertifolin. The nonribosomal peptide synthetase astA catalyzes ester bond formation between trihydroxy contifolin and benzoic acid (BA) or 4-hydroxy benzoic acid (4HBA), leading to the formation of dideacetyl astellolides A and B, respectively. Finally, the O-acetyltransferase astG converts dideacetyl astellolides A and B into deacetyl astellolides A and B. In Aspergillus oryzae (strain ATCC 42149 / RIB 40) (Yellow koji mold), this protein is Cytochrome P450 monooxygenase astJ.